The chain runs to 75 residues: Anionic peptide (75 aa).

An N-terminal signal peptide occupies residues 1-24 (MVSKSLIVLLLVSVLVSTFYTSEA).

The protein belongs to the non-disulfide-bridged peptide (NDBP) superfamily. In terms of tissue distribution, expressed by the venom gland.

It is found in the secreted. This is Anionic peptide from Tityus discrepans (Venezuelan scorpion).